The sequence spans 329 residues: Ribosomal protein L11 methyltransferase (329 aa).

4 residues coordinate S-adenosyl-L-methionine: Thr177, Gly198, Asp220, and Asn264.

This sequence belongs to the methyltransferase superfamily. PrmA family.

The protein localises to the cytoplasm. It carries out the reaction L-lysyl-[protein] + 3 S-adenosyl-L-methionine = N(6),N(6),N(6)-trimethyl-L-lysyl-[protein] + 3 S-adenosyl-L-homocysteine + 3 H(+). Its function is as follows. Methylates ribosomal protein L11. The sequence is that of Ribosomal protein L11 methyltransferase from Helicobacter pylori (strain J99 / ATCC 700824) (Campylobacter pylori J99).